A 148-amino-acid chain; its full sequence is Small ribosomal subunit protein eS19 (148 aa).

Positions His-79–Ala-90 are enriched in basic residues. Disordered stretches follow at residues His-79 to Ala-98 and Asp-116 to Glu-148. Residues Arg-130–Val-140 are compositionally biased toward basic and acidic residues.

The protein belongs to the eukaryotic ribosomal protein eS19 family.

This Emericella nidulans (strain FGSC A4 / ATCC 38163 / CBS 112.46 / NRRL 194 / M139) (Aspergillus nidulans) protein is Small ribosomal subunit protein eS19 (rps19).